We begin with the raw amino-acid sequence, 662 residues long: Glycine--tRNA ligase beta subunit (662 aa).

It belongs to the class-II aminoacyl-tRNA synthetase family. Tetramer of two alpha and two beta subunits.

The protein localises to the cytoplasm. The catalysed reaction is tRNA(Gly) + glycine + ATP = glycyl-tRNA(Gly) + AMP + diphosphate. The chain is Glycine--tRNA ligase beta subunit from Rickettsia akari (strain Hartford).